The sequence spans 92 residues: C-C motif chemokine 22 (92 aa).

A signal peptide spans Met-1–Ala-24. 2 disulfide bridges follow: Cys-36–Cys-60 and Cys-37–Cys-76.

Belongs to the intercrine beta (chemokine CC) family. As to expression, expressed by activated splenic B-lymphocytes and dendritic cells. Low expression in lung, thymocytes, lymph node, and unstimulated splenic cells.

The protein localises to the secreted. Its function is as follows. Chemotactic for activated T-lymphocytes. May play an important role in the collaboration of dendritic cells and B-lymphocytes with T-cells in immune responses. In Mus musculus (Mouse), this protein is C-C motif chemokine 22 (Ccl22).